The following is a 106-amino-acid chain: MIVTTTPSIEGKKIVDYKGIVSSEVIVGVNLVKDFIASITDIFGGRSGTYENELIRAREEALQELQNRAAMLGANAVVGIDIDYEVLGTNGSMLMVSVTGTAVVVE.

This sequence belongs to the UPF0145 family.

The protein is UPF0145 protein Csac_0771 of Caldicellulosiruptor saccharolyticus (strain ATCC 43494 / DSM 8903 / Tp8T 6331).